Reading from the N-terminus, the 400-residue chain is Probable glycosyltransferase WbjE (400 aa).

This sequence belongs to the glycosyltransferase group 1 family. Glycosyltransferase 4 subfamily.

It functions in the pathway bacterial outer membrane biogenesis; LPS O-antigen biosynthesis. This is Probable glycosyltransferase WbjE (wbjE) from Pseudomonas aeruginosa.